The primary structure comprises 187 residues: Peptidyl-tRNA hydrolase (187 aa).

Residue tyrosine 15 participates in tRNA binding. Histidine 20 functions as the Proton acceptor in the catalytic mechanism. TRNA-binding residues include phenylalanine 65, asparagine 67, and asparagine 113.

This sequence belongs to the PTH family. Monomer.

The protein resides in the cytoplasm. The enzyme catalyses an N-acyl-L-alpha-aminoacyl-tRNA + H2O = an N-acyl-L-amino acid + a tRNA + H(+). In terms of biological role, hydrolyzes ribosome-free peptidyl-tRNAs (with 1 or more amino acids incorporated), which drop off the ribosome during protein synthesis, or as a result of ribosome stalling. Catalyzes the release of premature peptidyl moieties from peptidyl-tRNA molecules trapped in stalled 50S ribosomal subunits, and thus maintains levels of free tRNAs and 50S ribosomes. This Elusimicrobium minutum (strain Pei191) protein is Peptidyl-tRNA hydrolase.